The primary structure comprises 258 residues: Phosphate import ATP-binding protein PstB 2 (258 aa).

An ABC transporter domain is found at 12–253 (IQVRDLNFYY…PQQKQTEDYI (242 aa)). Position 44-51 (44-51 (GPSGCGKS)) interacts with ATP.

Belongs to the ABC transporter superfamily. Phosphate importer (TC 3.A.1.7) family. The complex is composed of two ATP-binding proteins (PstB), two transmembrane proteins (PstC and PstA) and a solute-binding protein (PstS).

It is found in the cell inner membrane. It catalyses the reaction phosphate(out) + ATP + H2O = ADP + 2 phosphate(in) + H(+). Functionally, part of the ABC transporter complex PstSACB involved in phosphate import. Responsible for energy coupling to the transport system. The protein is Phosphate import ATP-binding protein PstB 2 of Yersinia pestis bv. Antiqua (strain Nepal516).